Consider the following 130-residue polypeptide: Single-stranded DNA-binding protein 1 (130 aa).

An SSB domain is found at 1 to 104 (MINNVVLIGR…VVAESFQILE (104 aa)). Residues 108–130 (NTANTSSLADSMPDYGPEPDLPF) form a disordered region.

As to quaternary structure, homotetramer.

In Streptococcus pyogenes serotype M18 (strain MGAS8232), this protein is Single-stranded DNA-binding protein 1 (ssb1).